A 207-amino-acid chain; its full sequence is Ribonuclease HII (207 aa).

The RNase H type-2 domain occupies 12–205; sequence GLVVGIDEVG…IRNMIEAEAH (194 aa). The a divalent metal cation site is built by aspartate 18, glutamate 19, and aspartate 114.

Belongs to the RNase HII family. Requires Mn(2+) as cofactor. Mg(2+) is required as a cofactor.

It localises to the cytoplasm. The enzyme catalyses Endonucleolytic cleavage to 5'-phosphomonoester.. Its function is as follows. Endonuclease that specifically degrades the RNA of RNA-DNA hybrids. This Gluconobacter oxydans (strain 621H) (Gluconobacter suboxydans) protein is Ribonuclease HII.